Consider the following 234-residue polypeptide: Large ribosomal subunit protein uL1 (234 aa).

Belongs to the universal ribosomal protein uL1 family. Part of the 50S ribosomal subunit.

Functionally, binds directly to 23S rRNA. The L1 stalk is quite mobile in the ribosome, and is involved in E site tRNA release. In terms of biological role, protein L1 is also a translational repressor protein, it controls the translation of the L11 operon by binding to its mRNA. The polypeptide is Large ribosomal subunit protein uL1 (Yersinia pseudotuberculosis serotype O:1b (strain IP 31758)).